A 251-amino-acid polypeptide reads, in one-letter code: Probable transcriptional regulatory protein SYO3AOP1_0685 (251 aa).

The protein belongs to the TACO1 family.

It localises to the cytoplasm. The sequence is that of Probable transcriptional regulatory protein SYO3AOP1_0685 from Sulfurihydrogenibium sp. (strain YO3AOP1).